The primary structure comprises 580 residues: MTNHEQVLTDYLAAFIEELVQAGVKEAIISPGSRSTPLALMMAEHPILKIYVDVDERSAGFFALGLAKASKRPVVLLCTSGTAAANYFPAVAEANLSQIPLIVLTADRPHELRNVGAPQAMDQLHLYGSHVKDFTDMALPENSEEMLRYAKWHGSRAVDIAMKTPRGPVHLNFPLREPLVPILEPSPFTATGKKHHHVHIYYTHEVLDDSSIQKMVTECTGKKGVFVVGPIDKKELEQPMVDLAKKLGWPILADPLSGLRSYGALDEVVIDQYDAFLKEAEIMDKLTPEVVIRFGSMPVSKPLKNWLEQLSDIRFYVVDPGAAWKDPIKAVTDMIHCDERFLLDIMQQNMPDDAKDAAWLSRWTSYNKVAREIVLAEMANTTILEEGKIVAELRRLLPEKAGLFIGNSMPIRDVDTYFSQIDKKIKMLANRGANGIDGVVSSALGASVVFQPMFLLIGDLSFYHDMNGLLMAKKYKMNLTIVIVNNDGGGIFSFLPQANEPKYFESLFGTSTELDFRFAAAFYDADYHETQSVDELEEAIDKASYHKGLDIIEVKTNRHENKANHQALWAKIADALKALN.

The protein belongs to the TPP enzyme family. MenD subfamily. As to quaternary structure, homodimer. Mg(2+) serves as cofactor. Requires Mn(2+) as cofactor. Thiamine diphosphate is required as a cofactor.

It carries out the reaction isochorismate + 2-oxoglutarate + H(+) = 5-enolpyruvoyl-6-hydroxy-2-succinyl-cyclohex-3-ene-1-carboxylate + CO2. The protein operates within quinol/quinone metabolism; 1,4-dihydroxy-2-naphthoate biosynthesis; 1,4-dihydroxy-2-naphthoate from chorismate: step 2/7. It participates in quinol/quinone metabolism; menaquinone biosynthesis. In terms of biological role, catalyzes the thiamine diphosphate-dependent decarboxylation of 2-oxoglutarate and the subsequent addition of the resulting succinic semialdehyde-thiamine pyrophosphate anion to isochorismate to yield 2-succinyl-5-enolpyruvyl-6-hydroxy-3-cyclohexene-1-carboxylate (SEPHCHC). The sequence is that of 2-succinyl-5-enolpyruvyl-6-hydroxy-3-cyclohexene-1-carboxylate synthase from Listeria monocytogenes serovar 1/2a (strain ATCC BAA-679 / EGD-e).